The following is a 385-amino-acid chain: UPF0284 protein PMM0439 (385 aa).

It belongs to the UPF0284 family.

This chain is UPF0284 protein PMM0439, found in Prochlorococcus marinus subsp. pastoris (strain CCMP1986 / NIES-2087 / MED4).